We begin with the raw amino-acid sequence, 823 residues long: ATP-dependent DNA helicase At3g02060, chloroplastic (823 aa).

The N-terminal 53 residues, 1 to 53, are a transit peptide targeting the chloroplast; sequence MMSLLPNPDPITVPLVLKLCSFPPPRRLFSLRLRRFTRKSSSLLPLVAVSSLS. The 163-residue stretch at 285 to 447 folds into the Helicase ATP-binding domain; it reads LTERETPMDR…LTGFRDASLI (163 aa). Residue 298 to 305 participates in ATP binding; it reads GDVGFGKT. The DEEQ box motif lies at 400-403; sequence DEEQ. The 158-residue stretch at 465–622 folds into the Helicase C-terminal domain; that stretch reads RKEKVIEAIK…GFQLAEKDMG (158 aa).

This sequence belongs to the helicase family.

It is found in the plastid. The protein localises to the chloroplast. The enzyme catalyses ATP + H2O = ADP + phosphate + H(+). This is ATP-dependent DNA helicase At3g02060, chloroplastic from Arabidopsis thaliana (Mouse-ear cress).